The sequence spans 126 residues: Holo-[acyl-carrier-protein] synthase (126 aa).

2 residues coordinate Mg(2+): aspartate 9 and glutamate 58.

Belongs to the P-Pant transferase superfamily. AcpS family. Mg(2+) serves as cofactor.

The protein resides in the cytoplasm. The catalysed reaction is apo-[ACP] + CoA = holo-[ACP] + adenosine 3',5'-bisphosphate + H(+). Functionally, transfers the 4'-phosphopantetheine moiety from coenzyme A to a Ser of acyl-carrier-protein. The polypeptide is Holo-[acyl-carrier-protein] synthase (Buchnera aphidicola subsp. Schizaphis graminum (strain Sg)).